The primary structure comprises 358 residues: Serine/threonine-protein phosphatase 2A activator 2 (358 aa).

This sequence belongs to the PTPA-type PPIase family.

The protein localises to the cytoplasm. The enzyme catalyses [protein]-peptidylproline (omega=180) = [protein]-peptidylproline (omega=0). In terms of biological role, PPIases accelerate the folding of proteins. It catalyzes the cis-trans isomerization of proline imidic peptide bonds in oligopeptides. Acts as a regulatory subunit for PP2A-like phosphatases modulating their activity or substrate specificity, probably by inducing a conformational change in the catalytic subunit, a direct target of the PPIase. Can reactivate inactive phosphatase PP2A-phosphatase methylesterase complexes (PP2Ai) in presence of ATP and Mg(2+) by dissociating the inactive form from the complex. The chain is Serine/threonine-protein phosphatase 2A activator 2 (RRD2) from Candida glabrata (strain ATCC 2001 / BCRC 20586 / JCM 3761 / NBRC 0622 / NRRL Y-65 / CBS 138) (Yeast).